A 1426-amino-acid chain; its full sequence is Epidermal growth factor receptor (1426 aa).

An N-terminal signal peptide occupies residues 1–30 (MLLRRRNGPCPFPLLLLLLAHCICIWPASA). Topologically, residues 31–868 (ARDRYARQNN…SKITANLDVN (838 aa)) are extracellular. 11 N-linked (GlcNAc...) asparagine glycosylation sites follow: Asn128, Asn241, Asn419, Asn443, Asn482, Asn569, Asn599, Asn617, Asn816, Asn823, and Asn828. A helical membrane pass occupies residues 869 to 889 (MIFIITGAVLVPTICILCVVT). The Cytoplasmic portion of the chain corresponds to 890–1426 (YICRQKQKAK…HRNRNTETRV (537 aa)). Thr902 carries the post-translational modification Phosphothreonine; by PKC. Residues 938–1198 (LRKGGVLGMG…QLTTVFAEFA (261 aa)) form the Protein kinase domain. ATP-binding positions include 944–952 (LGMGAFGRV) and Lys971. Asp1063 serves as the catalytic Proton acceptor. The segment at 1232–1297 (PTTDGSEAIA…DSSAREVGVG (66 aa)) is disordered. Residues 1257-1276 (HRTDCTDEMPKLNRYCKDPS) show a composition bias toward basic and acidic residues. Tyr1310 carries the phosphotyrosine; by autocatalysis modification.

This sequence belongs to the protein kinase superfamily. Tyr protein kinase family. EGF receptor subfamily. As to quaternary structure, homodimer. Binding of the ligand spitz triggers homodimerization of the receptor however, it is able to form dimers, albeit weakly, in the absence of spitz. Interacts (when phosphorylated on tyrosine residues) with Vav (via SH2 domain). Interacts (when ubiquitinated) with Graf. May interact (when phosphorylated) with EGFRAP (via SH2 domain). Ubiquitination by Cbl in response to high spi, promotes its interaction with Graf and thus facilitates its GPI-enriched endocytic compartment (GEEC) mediated endocytosis and its subsequent degradation. Ubiquitously expressed in embryos. In larvae, uniform expression is seen in wing disks, genital disk, anlagen of testis and ovary, and brain cortex. In eye-antenna disk, highest expression is anterior to morphogenetic furrow, levels remain high in photoreceptor precursor cells. This pattern is reversed in posterior eye disk. In adults expression is high in brain cortex and thoracic and abdominal ganglia.

Its subcellular location is the membrane. The catalysed reaction is L-tyrosyl-[protein] + ATP = O-phospho-L-tyrosyl-[protein] + ADP + H(+). Receptor tyrosine kinase, binding ligands of the EGF family and activating several signaling cascades to convert extracellular cues into appropriate cellular responses. Known ligands include spitz, gurken, vein and giant-lens. Transduces the signal through the ras-raf-MAPK pathway. Critical for the proliferation of imaginal tissues, and for the determination of both the antero-posterior and dorso-ventral polarities of the oocyte. In the embryo, plays a role in the establishment of ventral cell fates, maintenance of amnioserosa and ventral neuroectodermal cells, germ band retraction, cell fate specification in the central nervous system, and production and repair of the cuticle. During dorsal closure (DC) functions with the dpp- and ACK-signaling pathways to regulate expression of the myosin zip in the embryonic epidermis and amnioserosa (AS), and thus coordinate the progression of epidermal cell shape changes required for correct DC. In the embryonic epidermis, functions by negatively regulating dpp and consequently the dpp-dependent expression of the myosin zip. In the AS, negatively regulates the production/ and or secretion of a diffusible signal which, is produced by the ACK-signaling pathway, and acts in the AS and epidermal cells to promote zip expression. Also required in the AS to inhibit or delay apoptosis, and consequently slow the rate of DC. Therefore functions at multiple levels to negatively regulate morphogenesis during DC, suggesting that it acts as a general brake mechanism for adjusting the rate of dorsal closure to ensure that closure proceeds smoothly and without loss of epidermal integrity. During oogenesis, one of two tyrosine kinase chemoattractant receptors (Egfr and Pvr), that function in the border cells (BC) to detect guidance cues from the oocyte and transduce this information to the guidance pathway that regulate the collective migration of the BC cluster through the nurse cells to the oocyte. The polypeptide is Epidermal growth factor receptor (Egfr) (Drosophila melanogaster (Fruit fly)).